We begin with the raw amino-acid sequence, 493 residues long: Dipeptide permease D (493 aa).

The Cytoplasmic segment spans residues 1–13 (MNKHASQPRAIYY). Residues 14 to 34 (VVALQIWEYFSFYGMRALLIL) traverse the membrane as a helical segment. Over 35–48 (YLTNQLKYNDTHAY) the chain is Periplasmic. The chain crosses the membrane as a helical span at residues 49–69 (ELFSAYCSLVYVTPILGGFLA). Topologically, residues 70-77 (DKVLGNRM) are cytoplasmic. The chain crosses the membrane as a helical span at residues 78 to 98 (AVMLGALLMAIGHVVLGASEI). Residues 99 to 100 (HP) are Periplasmic-facing. A helical membrane pass occupies residues 101-121 (SFLYLSLAIIVCGYGLFKSNV). Over 122 to 137 (SCLLGELYEPTDPRRD) the chain is Cytoplasmic. Residues 138-158 (GGFSLMYAAGNVGSIIAPIAC) form a helical membrane-spanning segment. Residues 159-166 (GYAQEEYS) lie on the Periplasmic side of the membrane. The chain crosses the membrane as a helical span at residues 167-187 (WAMGFGLAAVGMIAGLVIFLC). Residues 188 to 211 (GNRHFTHTRGVNKKVLRATNFLLP) are Cytoplasmic-facing. The helical transmembrane segment at 212–232 (NWGWLLVLLVATPALITILFW) threads the bilayer. Over 233 to 234 (KE) the chain is Periplasmic. The helical transmembrane segment at 235–255 (WSVYALIVATIIGLGVLAKIY) threads the bilayer. Residues 256–266 (RKAENQKQRKE) are Cytoplasmic-facing. A helical transmembrane segment spans residues 267–287 (LGLIVTLTFFSMLFWAFAQQG). At 288 to 311 (GSSISLYIDRFVNRDMFGYTVPTA) the chain is on the periplasmic side. The helical transmembrane segment at 312–332 (MFQSINAFAVMLCGVFLAWVV) threads the bilayer. At 333-343 (KESVAGNRTVR) the chain is on the cytoplasmic side. The helical transmembrane segment at 344–364 (IWGKFALGLGLMSAGFCILTL) threads the bilayer. The Periplasmic portion of the chain corresponds to 365 to 378 (SARWSAMYGHSSLP). The chain crosses the membrane as a helical span at residues 379–399 (LMVLGLAVMGFAELFIDPVAM). The Cytoplasmic segment spans residues 400-412 (SQITRIEIPGVTG). The helical transmembrane segment at 413–433 (VLTGIYMLLSGAIANYLAGVI) threads the bilayer. The Periplasmic segment spans residues 434–461 (ADQTSQASFDASGAINYSINAYIEVFDQ). Residues 462 to 482 (ITWGALACVGLVLMIWLYQAL) form a helical membrane-spanning segment. At 483–493 (KFRNRALALES) the chain is on the cytoplasmic side.

The protein belongs to the major facilitator superfamily. Proton-dependent oligopeptide transporter (POT/PTR) (TC 2.A.17) family. DtpD subfamily.

The protein resides in the cell inner membrane. In terms of biological role, probable proton-dependent permease that transports dipeptides. In Escherichia coli (strain K12), this protein is Dipeptide permease D (dtpD).